The following is a 1077-amino-acid chain: Carbamoyl phosphate synthase large chain (1077 aa).

Residues 1-403 (MPKRTDIQSI…SLHKALRGLE (403 aa)) are carboxyphosphate synthetic domain. ATP-binding residues include R129, R169, G175, G176, E208, L210, E215, G241, I242, H243, Q285, and E299. Residues 133–328 (DKAMKSIGLE…IAKIAAKLAV (196 aa)) form the ATP-grasp 1 domain. Positions 285, 299, and 301 each coordinate Mg(2+). Residues Q285, E299, and N301 each contribute to the Mn(2+) site. Positions 404–553 (VGATGFDEMV…YSSYDDECEA (150 aa)) are oligomerization domain. Positions 554-935 (NPTDKEKIMV…AYAKAELGCG (382 aa)) are carbamoyl phosphate synthetic domain. Residues 678-869 (QQAVDRLGLL…LAKIAARVMA (192 aa)) form the ATP-grasp 2 domain. ATP is bound by residues R714, R753, L755, E760, G785, V786, H787, S788, Q828, and E840. Mg(2+) contacts are provided by Q828, E840, and N842. Mn(2+)-binding residues include Q828, E840, and N842. Positions 936 to 1077 (NVYPEGGRAL…HAQVQASLKA (142 aa)) constitute an MGS-like domain. An allosteric domain region spans residues 936 to 1077 (NVYPEGGRAL…HAQVQASLKA (142 aa)).

It belongs to the CarB family. Composed of two chains; the small (or glutamine) chain promotes the hydrolysis of glutamine to ammonia, which is used by the large (or ammonia) chain to synthesize carbamoyl phosphate. Tetramer of heterodimers (alpha,beta)4. Mg(2+) serves as cofactor. Requires Mn(2+) as cofactor.

It carries out the reaction hydrogencarbonate + L-glutamine + 2 ATP + H2O = carbamoyl phosphate + L-glutamate + 2 ADP + phosphate + 2 H(+). It catalyses the reaction hydrogencarbonate + NH4(+) + 2 ATP = carbamoyl phosphate + 2 ADP + phosphate + 2 H(+). The protein operates within amino-acid biosynthesis; L-arginine biosynthesis; carbamoyl phosphate from bicarbonate: step 1/1. Its pathway is pyrimidine metabolism; UMP biosynthesis via de novo pathway; (S)-dihydroorotate from bicarbonate: step 1/3. Its function is as follows. Large subunit of the glutamine-dependent carbamoyl phosphate synthetase (CPSase). CPSase catalyzes the formation of carbamoyl phosphate from the ammonia moiety of glutamine, carbonate, and phosphate donated by ATP, constituting the first step of 2 biosynthetic pathways, one leading to arginine and/or urea and the other to pyrimidine nucleotides. The large subunit (synthetase) binds the substrates ammonia (free or transferred from glutamine from the small subunit), hydrogencarbonate and ATP and carries out an ATP-coupled ligase reaction, activating hydrogencarbonate by forming carboxy phosphate which reacts with ammonia to form carbamoyl phosphate. In Vibrio vulnificus (strain CMCP6), this protein is Carbamoyl phosphate synthase large chain.